Consider the following 164-residue polypeptide: Leucine-rich single-pass membrane protein 2 (164 aa).

A helical transmembrane segment spans residues 97–117 (GFLLLLALLVLTCLVLALLAV).

The protein localises to the membrane. This chain is Leucine-rich single-pass membrane protein 2 (LSMEM2), found in Homo sapiens (Human).